A 500-amino-acid polypeptide reads, in one-letter code: Probable malate:quinone oxidoreductase (500 aa).

This sequence belongs to the MQO family. FAD is required as a cofactor.

It catalyses the reaction (S)-malate + a quinone = a quinol + oxaloacetate. Its pathway is carbohydrate metabolism; tricarboxylic acid cycle; oxaloacetate from (S)-malate (quinone route): step 1/1. The protein is Probable malate:quinone oxidoreductase of Halalkalibacterium halodurans (strain ATCC BAA-125 / DSM 18197 / FERM 7344 / JCM 9153 / C-125) (Bacillus halodurans).